We begin with the raw amino-acid sequence, 633 residues long: Probable potassium transport system protein Kup 3 (633 aa).

A run of 12 helical transmembrane segments spans residues 24–44 (LVLA…LYAF), 61–81 (VLGI…LKYV), 114–134 (LVLG…TPAI), 148–168 (PALS…LFFV), 180–200 (FGPV…IHIF), 222–242 (IGSA…AEAL), 258–278 (WFSL…AFVL), 298–318 (IPMV…VISG), 348–368 (IFMP…VLFF), 377–397 (AYGI…FIVM), 405–425 (LTAA…FLAA), and 427–447 (IAKF…MALI).

Belongs to the HAK/KUP transporter (TC 2.A.72) family.

It is found in the cell inner membrane. It carries out the reaction K(+)(in) + H(+)(in) = K(+)(out) + H(+)(out). Transport of potassium into the cell. Likely operates as a K(+):H(+) symporter. This is Probable potassium transport system protein Kup 3 from Rhizobium johnstonii (strain DSM 114642 / LMG 32736 / 3841) (Rhizobium leguminosarum bv. viciae).